The following is a 736-amino-acid chain: Gingipain R2 (736 aa).

The N-terminal stretch at 1–24 (MKKNFSRIVSIVAFSSLLGGMAFA) is a signal peptide. The propeptide occupies 25 to 229 (QPAERGRNPQ…SVFMNYEATR (205 aa)). Positions 307, 329, 332, 334, 336, 390, and 395 each coordinate Ca(2+). H440 (proton donor) is an active-site residue. The Nucleophile role is filled by C473. Ca(2+) contacts are provided by F478, E487, D521, E522, E525, H531, D613, and E639.

Belongs to the peptidase C25 family.

It is found in the secreted. The catalysed reaction is Hydrolysis of proteins and small molecule substrates, with a preference for Arg in P1.. With respect to regulation, inhibited by human histatin-3 1/24 (histatin-5). Functionally, thiol protease. Acts synergistically with RgpA to catalyze the maturation of fimbrial subunits, such as FimA. Its proteolytic activity is a major factor in both periodontal tissue destruction and in evasion of host defense mechanisms. The sequence is that of Gingipain R2 (rgpB) from Porphyromonas gingivalis (strain ATCC BAA-308 / W83).